We begin with the raw amino-acid sequence, 674 residues long: Acetyl-coenzyme A synthetase (674 aa).

Residues 201-204 (RGGR) and Thr-320 contribute to the CoA site. Residues 396–398 (GEP), 420–425 (DTYWQT), Asp-518, and Arg-533 contribute to the ATP site. Ser-541 is a CoA binding site. Arg-544 is an ATP binding site. A CoA-binding site is contributed by Arg-603.

Belongs to the ATP-dependent AMP-binding enzyme family.

The catalysed reaction is acetate + ATP + CoA = acetyl-CoA + AMP + diphosphate. This chain is Acetyl-coenzyme A synthetase (acsA), found in Dictyostelium discoideum (Social amoeba).